Consider the following 193-residue polypeptide: 7-methyl-GTP pyrophosphatase (193 aa).

Catalysis depends on Asp70, which acts as the Proton acceptor.

Belongs to the Maf family. YceF subfamily. It depends on a divalent metal cation as a cofactor.

Its subcellular location is the cytoplasm. It carries out the reaction N(7)-methyl-GTP + H2O = N(7)-methyl-GMP + diphosphate + H(+). Nucleoside triphosphate pyrophosphatase that hydrolyzes 7-methyl-GTP (m(7)GTP). May have a dual role in cell division arrest and in preventing the incorporation of modified nucleotides into cellular nucleic acids. This chain is 7-methyl-GTP pyrophosphatase, found in Aliivibrio fischeri (strain ATCC 700601 / ES114) (Vibrio fischeri).